Here is a 152-residue protein sequence, read N- to C-terminus: Globin CTT-E/E' (152 aa).

An N-terminal signal peptide occupies residues 1–15 (MKFIILALCVAAASA). Positions 16–152 (LSGDQIGLVQ…AFFGAVFAKM (137 aa)) constitute a Globin domain. Positions 73 and 102 each coordinate heme b.

The protein belongs to the globin family.

The protein is Globin CTT-E/E' (CTT-E) of Chironomus thummi thummi (Midge).